The primary structure comprises 252 residues: MLAKRIIAALDIKEGRVVKGIKFQNIRDAGDPIELARRYEEEGIDEIVFLDITASFEKRKILLDLVKRIAEEIYVPFTVGGGIKSVEEIREIIKSGADKVFLNTAAVNNPELVREAAKVVGSANLVIAIDAKWNGEYWEVYTHGGRKARGINAVEWAKEVERLGAGEILLTSMDTDGTQEGFDIPLTKAIVEAVDIPVIASGGAGSPEHFYEAFKIGAEAALAASIFHYGKYTVRELKEYLAEKGIPVRLNY.

Residues D11 and D130 contribute to the active site.

The protein belongs to the HisA/HisF family. As to quaternary structure, heterodimer of HisH and HisF.

The protein localises to the cytoplasm. It catalyses the reaction 5-[(5-phospho-1-deoxy-D-ribulos-1-ylimino)methylamino]-1-(5-phospho-beta-D-ribosyl)imidazole-4-carboxamide + L-glutamine = D-erythro-1-(imidazol-4-yl)glycerol 3-phosphate + 5-amino-1-(5-phospho-beta-D-ribosyl)imidazole-4-carboxamide + L-glutamate + H(+). The protein operates within amino-acid biosynthesis; L-histidine biosynthesis; L-histidine from 5-phospho-alpha-D-ribose 1-diphosphate: step 5/9. In terms of biological role, IGPS catalyzes the conversion of PRFAR and glutamine to IGP, AICAR and glutamate. The HisF subunit catalyzes the cyclization activity that produces IGP and AICAR from PRFAR using the ammonia provided by the HisH subunit. This chain is Imidazole glycerol phosphate synthase subunit HisF, found in Thermococcus onnurineus (strain NA1).